Consider the following 3999-residue polypeptide: Hybrid PKS-NRPS synthetase xenE (3999 aa).

One can recognise a Ketosynthase family 3 (KS3) domain in the interval 13–449 (REPIAVVGSG…GTNAHCIIEN (437 aa)). Active-site for beta-ketoacyl synthase activity residues include Cys186, His325, and His369. The region spanning 562–879 (VFTGQGAQWP…TGLLNRGKDD (318 aa)) is the Malonyl-CoA:ACP transacylase (MAT) domain. An N-terminal hotdog fold region spans residues 949–1084 (NPLLGSRTTD…GRVIVITGET (136 aa)). The PKS/mFAS DH domain occupies 949 to 1253 (NPLLGSRTTD…VVAFAEQTED (305 aa)). Positions 950 to 1252 (PLLGSRTTDV…RVVAFAEQTE (303 aa)) are dehydratase (DH) domain. The Proton acceptor; for dehydratase activity role is filled by His981. The interval 1099–1253 (LVDIPEDRFY…VVAFAEQTED (155 aa)) is C-terminal hotdog fold. Catalysis depends on Asp1159, which acts as the Proton donor; for dehydratase activity. A methyltransferase (cMeT) domain region spans residues 1298-1593 (YMKQLVTLFP…FSGADSPMPE (296 aa)). In terms of domain architecture, Ketoreductase (KR) spans 2133-2306 (TYVLFGLTSD…AASILHLGAV (174 aa)). The Carrier 1 domain maps to 2414–2495 (EEILEIVQDA…QLVEYAIGSM (82 aa)). Ser2455 bears the O-(pantetheine 4'-phosphoryl)serine mark. A disordered region spans residues 2501 to 2573 (PNRADSAKAS…EESPSESVND (73 aa)). A compositionally biased stretch (low complexity) spans 2526 to 2554 (SVSSSPSSLPKTSASGSSQQMSEGSSKTS). The interval 2580–3015 (EKVLPVSPGQ…EEVSLFTEQE (436 aa)) is condensation. An adenylation region spans residues 3045-3453 (AVHTDKVALK…RIEGDTQIKL (409 aa)). The Carrier 2 domain occupies 3562 to 3642 (RKLTDTESKL…AMAAAIQDTS (81 aa)). O-(pantetheine 4'-phosphoryl)serine is present on Ser3602. The tract at residues 3681–3900 (LTGATGFLGK…IDLITVEKAA (220 aa)) is reductase-like (R) domain (R).

This sequence in the C-terminal section; belongs to the NRP synthetase family.

Its pathway is mycotoxin biosynthesis. Hybrid PKS-NRPS synthetase; part of the gene cluster that mediates the biosynthesis of xenoacremones such as xenoacremone A, a compound that shows inhibitory activity toward the PI3K/AKT signaling pathway and which has the ability to induce apoptosis of A549 lung cancer cells. Within the pathway, cooperation of the hybrid PKS-NRPS xenE and the trans-acting enoyl reductase xenG is responsible for the formation of the reduced tyrosine-nonaketide derivative. The PKS module of xenE acted in combination with the trans-acting enoyl reductase xenG to produce a double-methylated nonaketide attached to the ACP domain. In parallel, the adenylation (A) domain of the NRPS module activated L-tyrosine, which was then transferred to the ACP domain. The condensation (C) domain subsequently linked this group to the polyketide chain, forming an enzyme-bound amide. Reductive release by the C-terminal R domain afforded the aldehyde derivative. The alpha/beta hydrolase xenA then accelerates intramolecular nucleophilic attack to give a pyrrolidone derivative. Subsequently, three enzymes, xenF, xenD, and xenC, coordinately participate in the conversion to xenoacremone B. XenF catalyzes sigmatropic rearrangement to form an A-ring, which leads to an unusual intermediate with a hexane ring, which is required for the formation of the tricarbocyclic product. Epoxidation catalyzed by xenD and the formation of the paracyclophane ether catalyzed by xenC initiate a spontaneous intramolecular Diels-Alder (IMDA) reaction to yield xenoacremone B. Spontaneous hydration of xenoacremone B leads to the formation of xenoacremone A, which undergoes subsequent methylation to afford xenoacremone C. This chain is Hybrid PKS-NRPS synthetase xenE, found in Xenoacremonium sinensis (Endophyte fungus).